The chain runs to 400 residues: Acetylornithine aminotransferase (400 aa).

Pyridoxal 5'-phosphate is bound by residues 102-103 (GA) and F135. R138 serves as a coordination point for N(2)-acetyl-L-ornithine. 220-223 (DEVQ) serves as a coordination point for pyridoxal 5'-phosphate. K249 is subject to N6-(pyridoxal phosphate)lysine. A N(2)-acetyl-L-ornithine-binding site is contributed by S276. T277 is a pyridoxal 5'-phosphate binding site.

It belongs to the class-III pyridoxal-phosphate-dependent aminotransferase family. ArgD subfamily. In terms of assembly, homodimer. Pyridoxal 5'-phosphate serves as cofactor.

Its subcellular location is the cytoplasm. The catalysed reaction is N(2)-acetyl-L-ornithine + 2-oxoglutarate = N-acetyl-L-glutamate 5-semialdehyde + L-glutamate. It functions in the pathway amino-acid biosynthesis; L-arginine biosynthesis; N(2)-acetyl-L-ornithine from L-glutamate: step 4/4. In Gloeobacter violaceus (strain ATCC 29082 / PCC 7421), this protein is Acetylornithine aminotransferase.